The following is a 259-amino-acid chain: UPF0246 protein NGK_0633 (259 aa).

It belongs to the UPF0246 family.

The protein is UPF0246 protein NGK_0633 of Neisseria gonorrhoeae (strain NCCP11945).